Here is a 394-residue protein sequence, read N- to C-terminus: 1-deoxy-D-xylulose 5-phosphate reductoisomerase (394 aa).

Residues T12, G13, S14, I15, G38, N41, and N132 each contribute to the NADPH site. K133 contacts 1-deoxy-D-xylulose 5-phosphate. NADPH is bound at residue E134. D156 lines the Mn(2+) pocket. S157, E158, S182, and H205 together coordinate 1-deoxy-D-xylulose 5-phosphate. Residue E158 coordinates Mn(2+). Residue G211 coordinates NADPH. 1-deoxy-D-xylulose 5-phosphate is bound by residues S218, N223, K224, and E227. E227 serves as a coordination point for Mn(2+).

This sequence belongs to the DXR family. It depends on Mg(2+) as a cofactor. Requires Mn(2+) as cofactor.

It carries out the reaction 2-C-methyl-D-erythritol 4-phosphate + NADP(+) = 1-deoxy-D-xylulose 5-phosphate + NADPH + H(+). The protein operates within isoprenoid biosynthesis; isopentenyl diphosphate biosynthesis via DXP pathway; isopentenyl diphosphate from 1-deoxy-D-xylulose 5-phosphate: step 1/6. Catalyzes the NADPH-dependent rearrangement and reduction of 1-deoxy-D-xylulose-5-phosphate (DXP) to 2-C-methyl-D-erythritol 4-phosphate (MEP). The chain is 1-deoxy-D-xylulose 5-phosphate reductoisomerase from Arthrobacter sp. (strain FB24).